We begin with the raw amino-acid sequence, 150 residues long: MNVILLDKIANLGNLGDQVAVKAGYARNYLLPQGKAVVANESNVKVFEARRAELEAKLAADLAAANQRAEKIAALEAVVIASKAGDEGKLFGSVGNRDIADAVTAAGVELAKSEVRLPLGALRTTGDFEVEVQLHTEVKAVVKVSIVAEA.

It belongs to the bacterial ribosomal protein bL9 family.

Binds to the 23S rRNA. The protein is Large ribosomal subunit protein bL9 of Shewanella oneidensis (strain ATCC 700550 / JCM 31522 / CIP 106686 / LMG 19005 / NCIMB 14063 / MR-1).